The primary structure comprises 325 residues: Ribosomal RNA small subunit methyltransferase H (325 aa).

S-adenosyl-L-methionine is bound by residues 45 to 47 (GGH), Asp-65, Tyr-92, Asp-113, and Gln-120.

Belongs to the methyltransferase superfamily. RsmH family.

It is found in the cytoplasm. The enzyme catalyses cytidine(1402) in 16S rRNA + S-adenosyl-L-methionine = N(4)-methylcytidine(1402) in 16S rRNA + S-adenosyl-L-homocysteine + H(+). In terms of biological role, specifically methylates the N4 position of cytidine in position 1402 (C1402) of 16S rRNA. The sequence is that of Ribosomal RNA small subunit methyltransferase H from Oleidesulfovibrio alaskensis (strain ATCC BAA-1058 / DSM 17464 / G20) (Desulfovibrio alaskensis).